The following is a 426-amino-acid chain: MAIAHLATEYVFSDFLLKEPTEPKFKGLRLELAVDKMVTCIAVGLPLLLISLAFAQEISIGTQISCFSPSSFSWRQAAFVDSYCWAAVQQKNSLQSESGNLPLWLHKFFPYILLLFAILLYLPALFWRFAAAPHLCSDLKFIMEELDKVYNRAIKAAKSARDLDLRDGPGPPGVTENVGQSLWEISESHFKYPIVEQYLKTKKNSSHLIMKYISCRLVTFAVVLLACIYLSYYFSLSSLSDEFLCSIKSGVLRNDSTIPDSFQCKLIAVGIFQLLSLINLLVYALLVPVVIYTLFVPFRQKTDVLKVYEILPTFDVLHFKSEGYNDLSLYNLFLEENISELKSYKCLKVLENIKSNGQGIDPMLLLTNLGMIKMDVIDGKVPMSLQTKGEDQGSQRMDFKDLDLSSETAANNGEKNSRQRLLNSSC.

Topologically, residues 1 to 40 (MAIAHLATEYVFSDFLLKEPTEPKFKGLRLELAVDKMVTC) are cytoplasmic. Cys-40 carries the S-nitrosocysteine modification. A helical transmembrane segment spans residues 41–61 (IAVGLPLLLISLAFAQEISIG). Residues 62 to 106 (TQISCFSPSSFSWRQAAFVDSYCWAAVQQKNSLQSESGNLPLWLH) lie on the Extracellular side of the membrane. 2 disulfide bridges follow: Cys-66–Cys-264 and Cys-84–Cys-245. The helical transmembrane segment at 107-127 (KFFPYILLLFAILLYLPALFW) threads the bilayer. The Cytoplasmic segment spans residues 128 to 216 (RFAAAPHLCS…HLIMKYISCR (89 aa)). Phosphotyrosine is present on Tyr-198. A helical transmembrane segment spans residues 217–237 (LVTFAVVLLACIYLSYYFSLS). Residues 238–277 (SLSDEFLCSIKSGVLRNDSTIPDSFQCKLIAVGIFQLLSL) lie on the Extracellular side of the membrane. Asn-254 carries N-linked (GlcNAc...) asparagine glycosylation. A helical membrane pass occupies residues 278 to 298 (INLLVYALLVPVVIYTLFVPF). Residues 299-426 (RQKTDVLKVY…SRQRLLNSSC (128 aa)) are Cytoplasmic-facing. Residue Cys-346 is modified to S-nitrosocysteine. Residues 407–426 (ETAANNGEKNSRQRLLNSSC) form a disordered region.

This sequence belongs to the pannexin family. In terms of assembly, homoheptameric. S-nitrosylation inhibits channel currents and ATP release. In terms of processing, N-glycosylation plays a role in cell surface targeting. Glycosylation at its extracellular surface makes unlikely that two oligomers could dock to form an intercellular channel such as in gap junctions. Exists in three glycosylation states: non-glycosylated (GLY0), high-mannose glycosylated (GLY1), and fully mature glycosylated (GLY2). Post-translationally, cleaved by CASP3 and CASP7 during apoptosis. Cleavage opens the channel for the release of metabolites and induces plasma membrane permeability during apoptosis. Phosphorylated at Tyr-198 by SRC. Phosphorylation activates ATP release. Constitutively phosphorylated in vascular smooth muscle cells. As to expression, expressed in the eye, thyroid, prostate, kidney and liver. Abundantly expressed in the CNS, including hippocampus, olfactory bulb, cortex, cerebellum and white matter.

The protein localises to the cell membrane. Its subcellular location is the endoplasmic reticulum membrane. The catalysed reaction is Ca(2+)(in) = Ca(2+)(out). The enzyme catalyses ATP(in) = ATP(out). It carries out the reaction K(+)(in) = K(+)(out). It catalyses the reaction chloride(in) = chloride(out). The catalysed reaction is iodide(out) = iodide(in). The enzyme catalyses Na(+)(in) = Na(+)(out). It carries out the reaction nitrate(in) = nitrate(out). It catalyses the reaction L-aspartate(out) = L-aspartate(in). The catalysed reaction is L-glutamate(out) = L-glutamate(in). The enzyme catalyses D-gluconate(in) = D-gluconate(out). It carries out the reaction spermidine(in) = spermidine(out). In terms of biological role, ion channel involved in a variety of physiological functions such as blood pressure regulation, apoptotic cell clearance and oogenesis. Forms anion-selective channels with relatively low conductance and an order of permeabilities: nitrate&gt;iodide&gt;chlroride&gt;&gt;aspartate=glutamate=gluconate. Can release ATP upon activation through phosphorylation or cleavage at C-terminus. May play a role as a Ca(2+)-leak channel to regulate ER Ca(2+) homeostasis. Its function is as follows. During apoptosis, the C terminal tail is cleaved by caspases, which opens the main pore acting as a large-pore ATP efflux channel with a broad distribution, which allows the regulated release of molecules and ions smaller than 1 kDa, such as nucleotides ATP and UTP, and selective plasma membrane permeability to attract phagocytes that engulf the dying cells. In Rattus norvegicus (Rat), this protein is Pannexin-1 (Panx1).